The primary structure comprises 341 residues: Phosphoribosylformylglycinamidine cyclo-ligase (341 aa).

This sequence belongs to the AIR synthase family.

It is found in the cytoplasm. It carries out the reaction 2-formamido-N(1)-(5-O-phospho-beta-D-ribosyl)acetamidine + ATP = 5-amino-1-(5-phospho-beta-D-ribosyl)imidazole + ADP + phosphate + H(+). It functions in the pathway purine metabolism; IMP biosynthesis via de novo pathway; 5-amino-1-(5-phospho-D-ribosyl)imidazole from N(2)-formyl-N(1)-(5-phospho-D-ribosyl)glycinamide: step 2/2. The chain is Phosphoribosylformylglycinamidine cyclo-ligase from Lachnoclostridium phytofermentans (strain ATCC 700394 / DSM 18823 / ISDg) (Clostridium phytofermentans).